A 125-amino-acid chain; its full sequence is Ribonuclease P protein component (125 aa).

It belongs to the RnpA family. Consists of a catalytic RNA component (M1 or rnpB) and a protein subunit.

The enzyme catalyses Endonucleolytic cleavage of RNA, removing 5'-extranucleotides from tRNA precursor.. RNaseP catalyzes the removal of the 5'-leader sequence from pre-tRNA to produce the mature 5'-terminus. It can also cleave other RNA substrates such as 4.5S RNA. The protein component plays an auxiliary but essential role in vivo by binding to the 5'-leader sequence and broadening the substrate specificity of the ribozyme. The sequence is that of Ribonuclease P protein component from Rhodococcus jostii (strain RHA1).